We begin with the raw amino-acid sequence, 1101 residues long: MRKASRSVGAAPKVPANNKSQATERSKSESSAPTASKVSRPGSSLSKAKSNDDLLAGMAGGLPASNSVKVKKNSTTSYPNSGTAMSGQEGRTRSSAGSSSNTKRSGSSGAKEVGSSRERLRERSRLTANKKPQGLGVGTGEVSAPSKRSRGRTDSDMIRMSKSKSDNQISDRAALEAKVKELMNLAKNKDAEILLLRTELRDTRSQLGQDVSDKSPDDLPLIHLQEQNTTVCEELQQLKSENRMLKDRLNALGFSLGQQPDDPDKLYGFQSLGINPGSHSDCGGGTLTSSVEGSAPGSMEDLLSQDESTLTGERRSSSMDNLDSECSEVYQPLTSSDDALDAPSSSSESEGLPSTERSRKGSSGNASEVSVACLTERIHQMEENQHSTAEELQATLQELADLQQITQELNSENERLGEEKVILMDSLCQQSDKLELFSRQLEYAQALLDEHHIAYSLDEDLKSSRYLDLEQRYMDLAENGRFEREQLLGVQQHLSNSLKMAEQDNKDAQDVIRALKERNHHMERIAEAEQLSKQALAATLEEYKATLNSEQGECARLKALLEQEKQRVAELYSIHSSGDASHIQNLLESVRSDKEKAESLASSLQEELLHARTDVNRMQDAFGKLEDEYRAFREEAQKQVSELTLALEKVRHELEEKETELSDMKETIFELEDEVEQHRAVKLHDNLIISDVENAVKKLQDQKHDMEREIKILNRKLREESAEWRQFQADLQTAVVIANDIKSEAQEEIGELKRQLQEALEKNEKLAKEMENATSRKQEEERGRVYNYMNAVERDLAALRQGMGLNRRSSTSSDPAPTVKTLIKSFDNASSQAAAVAAAAATPISRTPLSPSPMKTPPAAAVSPMQRHSISGPISVAKSLPGLSEKRPSYAEIPVQEHMLRSSSSSRSAASLPRVPAIDNAKSISVSRRSSEELKRDISVPDGSSAPSLMVMTSPSPQLSLSSSSPTASVTPTARSRIREERKDPLAALAREYGGSKRNALLKWCQKKTEGYPNIDITNFSSSWNDGLAFCALLHTYLPAHIPYQELTNQDKRRNFTLAFQAAESVGIKSTLDINEMVRTERPDWQCLMTYVTSIYKYFET.

2 disordered regions span residues 1–170 and 280–366; these read MRKA…NQIS and SDCG…SGNA. Composition is skewed to polar residues over residues 29-48 and 64-86; these read ESSAPTASKVSRPGSSLSKA and ASNSVKVKKNSTTSYPNSGTAMS. The segment covering 93–110 has biased composition (low complexity); the sequence is RSSAGSSSNTKRSGSSGA. 2 stretches are compositionally biased toward basic and acidic residues: residues 114 to 125 and 151 to 165; these read GSSRERLRERSR and GRTDSDMIRMSKSKS. A coiled-coil region spans residues 162 to 254; that stretch reads KSKSDNQISD…LKDRLNALGF (93 aa). Over residues 333-355 the composition is skewed to low complexity; that stretch reads LTSSDDALDAPSSSSESEGLPST. Coiled-coil stretches lie at residues 373 to 427 and 492 to 785; these read CLTE…MDSL and QHLS…RGRV. Positions 923 to 978 are disordered; it reads SISVSRRSSEELKRDISVPDGSSAPSLMVMTSPSPQLSLSSSSPTASVTPTARSRI. Positions 929–939 are enriched in basic and acidic residues; the sequence is RSSEELKRDIS. Low complexity predominate over residues 953–975; the sequence is TSPSPQLSLSSSSPTASVTPTAR. The Calponin-homology (CH) domain occupies 995–1100; the sequence is GSKRNALLKW…YVTSIYKYFE (106 aa).

It belongs to the cytospin-A family. May interact with both microtubules and actin cytoskeleton.

The protein resides in the cytoplasm. Its subcellular location is the cytoskeleton. The protein localises to the spindle. It is found in the cell junction. It localises to the gap junction. In terms of biological role, involved in cytokinesis and spindle organization. May play a role in actin cytoskeleton organization and microtubule stabilization and hence required for proper cell adhesion and migration. This is Cytospin-A (specc1l) from Xenopus tropicalis (Western clawed frog).